Reading from the N-terminus, the 432-residue chain is Carbohydrate esterase MZ0003 (432 aa).

The N-terminal stretch at 1 to 25 is a signal peptide; sequence MQRTCVLIVLIVTSTMWTPDPDVYA. A GXSYXG catalytic site motif motif is present at residues 266-271; it reads GHSRLG. The Nucleophile role is filled by S268. Residues K272 and W359 each contribute to the substrate site. The Charge relay system role is filled by H409.

It belongs to the carbohydrate esterase 15 (CE15) family. It depends on Does not require metal ions for activity. as a cofactor.

Its subcellular location is the periplasm. Is inhibited by PMSF and by NaF in vitro, which is consistent with the catalytic nucleophile being a serine. Displays some glucuronoyl esterase activity in vitro, since it is able to hydrolyze methyl 4-O-methyl-D-glucopyranosyluronate, allyl D-glucuronate, benzyl D-glucuronate and D-glucuronic acid methyl ester. However, esters of glucuronic acid are probably not its biological substrate, as they are not present in the marine environment. Can also hydrolyze a range of other esters, including p-nitrophenyl acetate. More likely biologically-relevant substrates for MZ0003 and other marine bacterial CE15s are algal cell wall polysaccharides, as these would be readily available in this environment and could be used as energy sources. This is Carbohydrate esterase MZ0003 from Unknown prokaryotic organism.